Reading from the N-terminus, the 222-residue chain is MSTKAKSKKVNKAWLHDHINDPYVKLATREGYRARAAYKLKEIDESLGLVKPGQLVVDLGSTPGAWSQYLRRRMSPEGAAAGELNGTIIALDILPMEPIEGVTFLQGDFREAELLEQVLGVLAGRKADLVVSDMAPNLSGIHSADAARVAHLIELAIDFAQHHLKPEGALVAKLFHGSGYDELVKLFKANFRTVKPFKPKASRDKSSETFLVGMGLKAQETL.

S-adenosyl-L-methionine is bound by residues Gly64, Trp66, Asp92, Asp108, and Asp133. Lys173 acts as the Proton acceptor in catalysis.

This sequence belongs to the class I-like SAM-binding methyltransferase superfamily. RNA methyltransferase RlmE family.

It is found in the cytoplasm. The enzyme catalyses uridine(2552) in 23S rRNA + S-adenosyl-L-methionine = 2'-O-methyluridine(2552) in 23S rRNA + S-adenosyl-L-homocysteine + H(+). In terms of biological role, specifically methylates the uridine in position 2552 of 23S rRNA at the 2'-O position of the ribose in the fully assembled 50S ribosomal subunit. The sequence is that of Ribosomal RNA large subunit methyltransferase E from Variovorax paradoxus (strain S110).